Reading from the N-terminus, the 569-residue chain is Arginine--tRNA ligase (569 aa).

The 'HIGH' region signature appears at 123-133 (ANPNGPLHVGH).

The protein belongs to the class-I aminoacyl-tRNA synthetase family.

It is found in the cytoplasm. It carries out the reaction tRNA(Arg) + L-arginine + ATP = L-arginyl-tRNA(Arg) + AMP + diphosphate. The chain is Arginine--tRNA ligase from Methanosarcina mazei (strain ATCC BAA-159 / DSM 3647 / Goe1 / Go1 / JCM 11833 / OCM 88) (Methanosarcina frisia).